The primary structure comprises 109 residues: Enhancer of rudimentary homolog (109 aa).

Belongs to the E(R) family. As to quaternary structure, homodimer.

Its function is as follows. May have a role in the cell cycle. This is Enhancer of rudimentary homolog from Arabidopsis thaliana (Mouse-ear cress).